Here is a 418-residue protein sequence, read N- to C-terminus: Glutamyl-tRNA reductase (418 aa).

Substrate-binding positions include 49 to 52 (TCNR), Ser-109, 114 to 116 (EPQ), and Gln-120. The active-site Nucleophile is the Cys-50. Residue 189–194 (GAGETI) coordinates NADP(+).

The protein belongs to the glutamyl-tRNA reductase family. In terms of assembly, homodimer.

The catalysed reaction is (S)-4-amino-5-oxopentanoate + tRNA(Glu) + NADP(+) = L-glutamyl-tRNA(Glu) + NADPH + H(+). It participates in porphyrin-containing compound metabolism; protoporphyrin-IX biosynthesis; 5-aminolevulinate from L-glutamyl-tRNA(Glu): step 1/2. Its function is as follows. Catalyzes the NADPH-dependent reduction of glutamyl-tRNA(Glu) to glutamate 1-semialdehyde (GSA). This chain is Glutamyl-tRNA reductase, found in Enterobacter sp. (strain 638).